Reading from the N-terminus, the 171-residue chain is Small ribosomal subunit protein uS5 (171 aa).

The 64-residue stretch at 13 to 76 (FLERLVAVNR…DQAKKNLVTI (64 aa)) folds into the S5 DRBM domain.

It belongs to the universal ribosomal protein uS5 family. As to quaternary structure, part of the 30S ribosomal subunit. Contacts proteins S4 and S8.

Its function is as follows. With S4 and S12 plays an important role in translational accuracy. In terms of biological role, located at the back of the 30S subunit body where it stabilizes the conformation of the head with respect to the body. This Dichelobacter nodosus (strain VCS1703A) protein is Small ribosomal subunit protein uS5.